We begin with the raw amino-acid sequence, 469 residues long: Argininosuccinate lyase (469 aa).

The protein belongs to the lyase 1 family. Argininosuccinate lyase subfamily.

Its subcellular location is the cytoplasm. It catalyses the reaction 2-(N(omega)-L-arginino)succinate = fumarate + L-arginine. The protein operates within amino-acid biosynthesis; L-arginine biosynthesis; L-arginine from L-ornithine and carbamoyl phosphate: step 3/3. The protein is Argininosuccinate lyase of Paracoccus denitrificans (strain Pd 1222).